The primary structure comprises 272 residues: MKLLKNVLLGLFFSMSISGFSEVKVSDTFVKQDTVVEPKIRVLLSNESTTALIEAKGPYRIYGDNVLLDTAIQGQRCVVHALYEGIRWGEFYPGLQCLKIEPVDDTASLFFNGIQYQGSLYVHRKDNHCIMVSNEVTIEDYLKSVLSIKYLEELDKEALSACIILERTALYEKLLARNPQNFWHVKAEEEGYAGFGVTKQFYGVEEAIDWTARLVVDSPQGLIIDAQGLLQSNVDRLAIEGFNARQILEKFYKDVDFVVIESWNEELDGEIR.

Belongs to the chlamydial CPn_0389/CT_041/TC_0311 family.

This is an uncharacterized protein from Chlamydia pneumoniae (Chlamydophila pneumoniae).